The chain runs to 335 residues: Glycerol-3-phosphate dehydrogenase [NAD(P)+] (335 aa).

The NADPH site is built by S10, F11, R31, and K105. Residues K105, G136, and S138 each contribute to the sn-glycerol 3-phosphate site. A140 serves as a coordination point for NADPH. The sn-glycerol 3-phosphate site is built by K191, D244, S254, R255, and N256. Catalysis depends on K191, which acts as the Proton acceptor. An NADPH-binding site is contributed by R255. The NADPH site is built by V279 and E281.

Belongs to the NAD-dependent glycerol-3-phosphate dehydrogenase family.

The protein localises to the cytoplasm. The enzyme catalyses sn-glycerol 3-phosphate + NAD(+) = dihydroxyacetone phosphate + NADH + H(+). It carries out the reaction sn-glycerol 3-phosphate + NADP(+) = dihydroxyacetone phosphate + NADPH + H(+). It participates in membrane lipid metabolism; glycerophospholipid metabolism. Functionally, catalyzes the reduction of the glycolytic intermediate dihydroxyacetone phosphate (DHAP) to sn-glycerol 3-phosphate (G3P), the key precursor for phospholipid synthesis. The chain is Glycerol-3-phosphate dehydrogenase [NAD(P)+] from Leptospira interrogans serogroup Icterohaemorrhagiae serovar Lai (strain 56601).